Reading from the N-terminus, the 341-residue chain is Ferredoxin--NADP reductase (341 aa).

7 residues coordinate FAD: Asp-38, Gln-46, Tyr-51, Val-91, Phe-125, Asp-292, and Thr-333.

It belongs to the ferredoxin--NADP reductase type 2 family. Homodimer. The cofactor is FAD.

The enzyme catalyses 2 reduced [2Fe-2S]-[ferredoxin] + NADP(+) + H(+) = 2 oxidized [2Fe-2S]-[ferredoxin] + NADPH. The sequence is that of Ferredoxin--NADP reductase from Gluconacetobacter diazotrophicus (strain ATCC 49037 / DSM 5601 / CCUG 37298 / CIP 103539 / LMG 7603 / PAl5).